The primary structure comprises 330 residues: Aspartate--ammonia ligase (330 aa).

The protein belongs to the class-II aminoacyl-tRNA synthetase family. AsnA subfamily.

It is found in the cytoplasm. The enzyme catalyses L-aspartate + NH4(+) + ATP = L-asparagine + AMP + diphosphate + H(+). It participates in amino-acid biosynthesis; L-asparagine biosynthesis; L-asparagine from L-aspartate (ammonia route): step 1/1. This is Aspartate--ammonia ligase from Streptococcus pyogenes serotype M49 (strain NZ131).